Consider the following 276-residue polypeptide: Undecaprenyl-diphosphatase (276 aa).

The next 7 membrane-spanning stretches (helical) occupy residues 48–68 (AANSFKVVIQLGSILAVAIVF), 92–112 (LTIAQIAVGLVPAAVLGFLFE), 119–139 (LFSVRTVAYGLIAGAVLMLIA), 155–175 (ITYKQAFCVGLFQCLALWPGF), 196–216 (ADFTFIMAIPIMAGASLLKLV), 229–249 (FFLVGFICAFVVALLVVKFFL), and 255–275 (IKLVPFAIYRVILGIILIMLV).

This sequence belongs to the UppP family.

It is found in the cell membrane. The catalysed reaction is di-trans,octa-cis-undecaprenyl diphosphate + H2O = di-trans,octa-cis-undecaprenyl phosphate + phosphate + H(+). Catalyzes the dephosphorylation of undecaprenyl diphosphate (UPP). Confers resistance to bacitracin. The chain is Undecaprenyl-diphosphatase from Bacillus velezensis (strain DSM 23117 / BGSC 10A6 / LMG 26770 / FZB42) (Bacillus amyloliquefaciens subsp. plantarum).